The primary structure comprises 154 residues: Endoribonuclease YbeY (154 aa).

Positions 114, 118, and 124 each coordinate Zn(2+).

The protein belongs to the endoribonuclease YbeY family. Zn(2+) serves as cofactor.

The protein resides in the cytoplasm. In terms of biological role, single strand-specific metallo-endoribonuclease involved in late-stage 70S ribosome quality control and in maturation of the 3' terminus of the 16S rRNA. The protein is Endoribonuclease YbeY of Histophilus somni (strain 129Pt) (Haemophilus somnus).